The following is a 179-amino-acid chain: Alkyl hydroperoxide reductase AhpD (179 aa).

The Proton donor role is filled by C130. An intrachain disulfide couples C130 to C133. Catalysis depends on C133, which acts as the Cysteine sulfenic acid (-SOH) intermediate.

This sequence belongs to the AhpD family. As to quaternary structure, homotrimer.

The enzyme catalyses N(6)-[(R)-dihydrolipoyl]-L-lysyl-[lipoyl-carrier protein] + a hydroperoxide = N(6)-[(R)-lipoyl]-L-lysyl-[lipoyl-carrier protein] + an alcohol + H2O. Functionally, antioxidant protein with alkyl hydroperoxidase activity. Required for the reduction of the AhpC active site cysteine residues and for the regeneration of the AhpC enzyme activity. The polypeptide is Alkyl hydroperoxide reductase AhpD (Nocardia farcinica (strain IFM 10152)).